A 165-amino-acid chain; its full sequence is UPF0303 protein Bcenmc03_1534 (165 aa).

This sequence belongs to the UPF0303 family.

The sequence is that of UPF0303 protein Bcenmc03_1534 from Burkholderia orbicola (strain MC0-3).